We begin with the raw amino-acid sequence, 233 residues long: 7-cyano-7-deazaguanine synthase (233 aa).

7-17 serves as a coordination point for ATP; that stretch reads LSGGLDSAVTS. The Zn(2+) site is built by Cys-195, Cys-206, Cys-209, and Cys-212.

This sequence belongs to the QueC family. It depends on Zn(2+) as a cofactor.

The enzyme catalyses 7-carboxy-7-deazaguanine + NH4(+) + ATP = 7-cyano-7-deazaguanine + ADP + phosphate + H2O + H(+). Its pathway is purine metabolism; 7-cyano-7-deazaguanine biosynthesis. Functionally, catalyzes the ATP-dependent conversion of 7-carboxy-7-deazaguanine (CDG) to 7-cyano-7-deazaguanine (preQ(0)). This Methanococcus maripaludis (strain C6 / ATCC BAA-1332) protein is 7-cyano-7-deazaguanine synthase.